The chain runs to 149 residues: Macrodomain Ter protein (149 aa).

This sequence belongs to the MatP family. In terms of assembly, homodimer.

The protein resides in the cytoplasm. Functionally, required for spatial organization of the terminus region of the chromosome (Ter macrodomain) during the cell cycle. Prevents early segregation of duplicated Ter macrodomains during cell division. Binds specifically to matS, which is a 13 bp signature motif repeated within the Ter macrodomain. This is Macrodomain Ter protein from Vibrio vulnificus (strain YJ016).